Consider the following 501-residue polypeptide: Glucans biosynthesis protein G (501 aa).

The N-terminal stretch at 1 to 25 (MNRRQVLTGLAALPLLQAKPDPAAA) is a signal peptide.

The protein belongs to the OpgD/OpgG family.

Its subcellular location is the periplasm. It participates in glycan metabolism; osmoregulated periplasmic glucan (OPG) biosynthesis. Involved in the biosynthesis of osmoregulated periplasmic glucans (OPGs). The chain is Glucans biosynthesis protein G from Rhodopseudomonas palustris (strain ATCC BAA-98 / CGA009).